Consider the following 777-residue polypeptide: Proton-coupled zinc antiporter SLC30A5 (777 aa).

Residues Met1–Tyr28 are Cytoplasmic-facing. A helical transmembrane segment spans residues Ile29–Leu49. At Leu50–Val52 the chain is on the lumenal side. A helical membrane pass occupies residues Val53–Phe73. The Cytoplasmic segment spans residues Gln74–His94. A helical membrane pass occupies residues Ala95 to Leu115. Over Arg116–Thr117 the chain is Lumenal. A helical membrane pass occupies residues Leu118–Gly138. Topologically, residues Ser139–Gly148 are cytoplasmic. The helical transmembrane segment at Ala149–Ala169 threads the bilayer. Residues Lys170 to Arg189 are Lumenal-facing. Residues Ala190 to Leu210 form a helical membrane-spanning segment. The Cytoplasmic portion of the chain corresponds to Cys211–Gln234. The helical transmembrane segment at Ala235 to Thr255 threads the bilayer. Topologically, residues Thr256 to Trp263 are lumenal. A helical transmembrane segment spans residues Ser264–Val284. At Glu285–Arg299 the chain is on the cytoplasmic side. The helical transmembrane segment at Tyr300–Ile320 threads the bilayer. The Lumenal portion of the chain corresponds to Thr321–His338. The chain crosses the membrane as a helical span at residues Val339 to Ala359. Over Ser360–Gln414 the chain is Cytoplasmic. A helical membrane pass occupies residues Ile415–Trp435. Residues Thr436–Asp444 are Lumenal-facing. Residues Gly445–Thr465 traverse the membrane as a helical segment. Zn(2+) contacts are provided by His447 and Asp451. Residues Arg466–Ser484 are Cytoplasmic-facing. Residues Gly485–Ala505 traverse the membrane as a helical segment. Residues Arg506–Asp516 lie on the Lumenal side of the membrane. A helical membrane pass occupies residues Met517–Ser537. A his-rich loop; required for zinc transport region spans residues His538–His586. At His538–Val604 the chain is on the cytoplasmic side. Positions Gly547–Ala593 are disordered. Composition is skewed to basic residues over residues Gly555–His571 and Asn579–Ser589. A helical membrane pass occupies residues Phe605–Ile625. Positions 607 and 611 each coordinate Zn(2+). The Lumenal segment spans residues Arg626–Gly629. The helical transmembrane segment at Trp630 to Leu650 threads the bilayer. The Cytoplasmic segment spans residues Pro651–Met777.

The protein belongs to the cation diffusion facilitator (CDF) transporter (TC 2.A.4) family. SLC30A subfamily. As to quaternary structure, heterodimer with SLC30A6/ZNT6; form a functional zinc ion transmembrane transporter.

It localises to the golgi apparatus. It is found in the golgi stack membrane. The protein localises to the cytoplasmic vesicle. Its subcellular location is the COPII-coated vesicle membrane. The protein resides in the secretory vesicle membrane. It localises to the trans-Golgi network membrane. It carries out the reaction Zn(2+)(in) + 2 H(+)(out) = Zn(2+)(out) + 2 H(+)(in). Its function is as follows. Together with SLC30A6 forms a functional proton-coupled zinc ion antiporter mediating zinc entry into the lumen of organelles along the secretory pathway. By contributing to zinc ion homeostasis within the early secretory pathway, regulates the activation and folding of enzymes like alkaline phosphatases and enzymes involved in phosphatidylinositol glycan anchor biosynthesis. In Xenopus tropicalis (Western clawed frog), this protein is Proton-coupled zinc antiporter SLC30A5 (slc30a5).